The primary structure comprises 598 residues: Elongation factor 4 (598 aa).

The tr-type G domain maps to 2–183 (KNIRNFCIIA…AIINRVPAPS (182 aa)). GTP is bound by residues 14–19 (DHGKST) and 130–133 (NKVD).

It belongs to the TRAFAC class translation factor GTPase superfamily. Classic translation factor GTPase family. LepA subfamily.

The protein localises to the cell inner membrane. It carries out the reaction GTP + H2O = GDP + phosphate + H(+). In terms of biological role, required for accurate and efficient protein synthesis under certain stress conditions. May act as a fidelity factor of the translation reaction, by catalyzing a one-codon backward translocation of tRNAs on improperly translocated ribosomes. Back-translocation proceeds from a post-translocation (POST) complex to a pre-translocation (PRE) complex, thus giving elongation factor G a second chance to translocate the tRNAs correctly. Binds to ribosomes in a GTP-dependent manner. This chain is Elongation factor 4, found in Christiangramia forsetii (strain DSM 17595 / CGMCC 1.15422 / KT0803) (Gramella forsetii).